Here is a 307-residue protein sequence, read N- to C-terminus: Stage III sporulation protein AA (307 aa).

143 to 150 (GPPQTGKT) serves as a coordination point for ATP.

The polypeptide is Stage III sporulation protein AA (spoIIIAA) (Bacillus subtilis (strain 168)).